The primary structure comprises 651 residues: MGQIFSRSASPIPRPPRGLAAHHWLNFLQAAYRLEPGPSSYDFHQLKKFLKIALETPARICPINYSLLASLLPKGYPGRVNEILHILIQTQAQIPSRPAPPPPSSPTHDPPDSDPQIPPPYVEPTAPQVLPVMHPHGAPPNHRPWQMKDLQAIKQEVSQAAPGSPQFMQTIRLAVQQFDPTAKDLQDLLQYLCSSLVASLHHQQLDSLISEAETRGITGYNPLAGPLRVQANNPQQQGLRREYQQLWLAAFAALPGSAKDPSWASILQGLEEPYHAFVERLNIALDNGLPEGTPKDPILRSLAYSNANKECQKLLQARGHTNSPLGDMLRACQTWTPKDKTKVLVVQPKKPPPNQPCFRCGKAGHWSRDCTQPRPPPGPCPLCQDPTHWKRDCPRLKPTIPEPEPEEDALLLDLPADIPHPKNLHRGGGLTSPPTLQQVLPNQDPASILPVIPLDPARRPVIKAQVDTQTSHPKTIEALLDTGADMTVLPIALFSSNTPLKNTSVLGAGGQTQDHFKLTSLPVLIRLPFRTTPIVLTSCLVDTKNNWAIIGRDALQQCQGVLYLPEAKRPPVILPIQAPAVLGLEHLPRPPEISQFPLNQNASRPCNTWSGRPWRQAISNPTPGQGITQYSQLKRPMEPGDSSTTCGPLTL.

Gly-2 carries N-myristoyl glycine; by host lipidation. The segment at 93 to 144 is disordered; sequence QIPSRPAPPPPSSPTHDPPDSDPQIPPPYVEPTAPQVLPVMHPHGAPPNHRP. Ser-105 is subject to Phosphoserine; by host MAPK1. The short motif at 118 to 121 is the PPXY motif element; that stretch reads PPPY. A PTAP/PSAP motif motif is present at residues 124–127; that stretch reads PTAP. CCHC-type zinc fingers lie at residues 355-372 and 378-395; these read QPCFRCGKAGHWSRDCTQ and GPCPLCQDPTHWKRDCPR. The region spanning 476–554 is the Peptidase A2 domain; that stretch reads IEALLDTGAD…NNWAIIGRDA (79 aa). The active-site For protease activity; shared with dimeric partner is Asp-481.

In terms of assembly, homodimer; the homodimers are part of the immature particles. Interacts with human TSG101 and NEDD4; these interactions are essential for budding and release of viral particles. Homodimer; further assembles as homohexamers. In terms of processing, specific enzymatic cleavages by the viral protease yield mature proteins. The polyprotein is cleaved during and after budding, this process is termed maturation. The protease is autoproteolytically processed at its N- and C-termini. Phosphorylation of the matrix protein p19 by MAPK1 seems to play a role in budding. Post-translationally, myristoylated. Myristoylation of the matrix (MA) domain mediates the transport and binding of Gag polyproteins to the host plasma membrane and is required for the assembly of viral particles.

Its subcellular location is the virion. In terms of biological role, the matrix domain targets Gag, Gag-Pro and Gag-Pro-Pol polyproteins to the plasma membrane via a multipartite membrane binding signal, that includes its myristoylated N-terminus. Matrix protein. Its function is as follows. Forms the spherical core of the virus that encapsulates the genomic RNA-nucleocapsid complex. Functionally, binds strongly to viral nucleic acids and promote their aggregation. Also destabilizes the nucleic acids duplexes via highly structured zinc-binding motifs. In terms of biological role, the aspartyl protease mediates proteolytic cleavages of Gag and Gag-Pol polyproteins during or shortly after the release of the virion from the plasma membrane. Cleavages take place as an ordered, step-wise cascade to yield mature proteins. This process is called maturation. Displays maximal activity during the budding process just prior to particle release from the cell. Cleaves the translation initiation factor eIF4G leading to the inhibition of host cap-dependent translation. This chain is Gag-Pro polyprotein (gag-pro), found in Human T-cell leukemia virus 1 (strain Japan ATK-1 subtype A) (HTLV-1).